We begin with the raw amino-acid sequence, 504 residues long: Doublesex- and mab-3-related transcription factor A1 (504 aa).

Residues Met-1–Val-13 show a composition bias toward basic and acidic residues. Positions Met-1–Ala-27 are disordered. The DM DNA-binding region spans Cys-97 to Arg-144. Disordered stretches follow at residues Gly-170–Ala-192 and Ser-266–Glu-307. A compositionally biased stretch (low complexity) spans Arg-293–Ser-306. The DMA domain occupies Arg-327–Gln-362.

This sequence belongs to the DMRT family. As to expression, expressed in liver, kidney, pancreas, prostate and weakly detected in testis and ovary.

It localises to the nucleus. The chain is Doublesex- and mab-3-related transcription factor A1 (DMRTA1) from Homo sapiens (Human).